We begin with the raw amino-acid sequence, 161 residues long: Small ribosomal subunit protein bS16 (161 aa).

The interval 114 to 161 is disordered; that stretch reads EGGPTTEATKPKKKSPAKKAKGGEGDADAAAEKVEASAEGEQTESAES. The segment covering 124-133 has biased composition (basic residues); that stretch reads PKKKSPAKKA.

The protein belongs to the bacterial ribosomal protein bS16 family.

The protein is Small ribosomal subunit protein bS16 of Mycobacterium marinum (strain ATCC BAA-535 / M).